A 651-amino-acid polypeptide reads, in one-letter code: MSDKIHPVPKQVKAQALIDKEKYLKWYEESVENPDKFWGKHGKRIDWFKPYTKVKNTSFTGKVSIKWFEDGQTNVSYNCIDRHLKTNGDQVAIIWEGDNPYIDKKITYNELYEHVCRMANVLKKHGVKKGDRVTIYMPMIPEAAYAMLACARIGAVHSVVFGGFSPEALAGRIVDCESTFVITCDEGLRGGKPVPLKDNTDTAIHIAARQHVHVSKVLVVRRTGGKTGWAPGRDLWYHQEVATVKAECPPVKMKAEDPLFILYTSGSTGKPKGVLHTTGGYLVYASMTHEYVFDYHHGDIYWCTADVGWVTGHSYIVYGPLANCATTLMFEGVPNFPDQGRFWEVIDKHKVNIFYTAPTAIRSLMGAGDDFVTRSSRSSLRLLGTVGEPINPEAWEWYYNVVGDKRCPVIDTWWQTETGGHMITPLPGAIDLKPGSATVPFFGVKPQLVDNEGKVLEGAADGNLCITDSWPGQMRTVYGDHERFIQTYFSTYKGKYFTGDGCRRDEDGYYWITGRVDDVLNVSGHRLGTAEVESALVSHNLVSEAAVVGYPHAIKGQGIYCYVTLMAGHEGTDTLRQELVKHVRAEIGPIASPDKIQFAPGLPKTRSGKIMRRILRKIAEDDFGALGDTSTLADPAVVDDLIANRQNKATA.

Residues 189–192 (RGGK), Thr-311, and Asn-335 contribute to the CoA site. ATP contacts are provided by residues 387–389 (GEP), 411–416 (DTWWQT), Asp-500, and Arg-515. CoA is bound at residue Ser-523. Arg-526 contacts ATP. The Mg(2+) site is built by Val-537, His-539, and Val-542. Arg-584 contacts CoA. Position 609 is an N6-acetyllysine (Lys-609).

This sequence belongs to the ATP-dependent AMP-binding enzyme family. It depends on Mg(2+) as a cofactor. Post-translationally, acetylated. Deacetylation by the SIR2-homolog deacetylase activates the enzyme.

The enzyme catalyses acetate + ATP + CoA = acetyl-CoA + AMP + diphosphate. Its function is as follows. Catalyzes the conversion of acetate into acetyl-CoA (AcCoA), an essential intermediate at the junction of anabolic and catabolic pathways. AcsA undergoes a two-step reaction. In the first half reaction, AcsA combines acetate with ATP to form acetyl-adenylate (AcAMP) intermediate. In the second half reaction, it can then transfer the acetyl group from AcAMP to the sulfhydryl group of CoA, forming the product AcCoA. This Rhizobium etli (strain CIAT 652) protein is Acetyl-coenzyme A synthetase.